A 565-amino-acid polypeptide reads, in one-letter code: Thiol:disulfide interchange protein DsbD (565 aa).

A signal peptide spans 1–19 (MAQRIFTLILLLCSTSVFA). Cystine bridges form between Cys122–Cys128 and Cys182–Cys304. A run of 7 helical transmembrane segments spans residues 163 to 183 (LPFSALWALLIGIGIAFTPCV), 208 to 228 (LLTFIYVQGMALTYTALGLVV), 243 to 263 (YVLIGLAIVFTLLAMSMFGLF), 289 to 309 (GVFIMGAIAGLICSPCTTAPL), 323 to 343 (WLGGGTLYLYALGMGLPLMLI), 357 to 377 (WMEQVKTAFGFVILALPVFLL), and 384 to 404 (IWGLRLWSALGVAFFGWAFIT). The Thioredoxin domain maps to 434–565 (WAFGATHTAQ…FSAHLRDRQP (132 aa)). An intrachain disulfide couples Cys480 to Cys483.

This sequence belongs to the thioredoxin family. DsbD subfamily.

It is found in the cell inner membrane. It carries out the reaction [protein]-dithiol + NAD(+) = [protein]-disulfide + NADH + H(+). The catalysed reaction is [protein]-dithiol + NADP(+) = [protein]-disulfide + NADPH + H(+). Its function is as follows. Required to facilitate the formation of correct disulfide bonds in some periplasmic proteins and for the assembly of the periplasmic c-type cytochromes. Acts by transferring electrons from cytoplasmic thioredoxin to the periplasm. This transfer involves a cascade of disulfide bond formation and reduction steps. The protein is Thiol:disulfide interchange protein DsbD of Escherichia coli O6:H1 (strain CFT073 / ATCC 700928 / UPEC).